The following is a 272-amino-acid chain: Sulfate transporter CysZ (272 aa).

The next 4 membrane-spanning stretches (helical) occupy residues 29-49 (FVIMPIVLNTILLCGLFWLFI), 66-86 (WLSFLSVILLTLSILTILLLF), 148-168 (IIALFLLSFIPLVGQTIVPVL), and 219-239 (FVPVINLLIMPVAVCGATLMW).

Belongs to the CysZ family.

The protein localises to the cell inner membrane. Its function is as follows. High affinity, high specificity proton-dependent sulfate transporter, which mediates sulfate uptake. Provides the sulfur source for the cysteine synthesis pathway. This Haemophilus influenzae (strain PittGG) protein is Sulfate transporter CysZ.